Consider the following 281-residue polypeptide: Arylamine N-acetyltransferase / N-hydroxyarylamine O-acetyltransferase (281 aa).

Cys69 (acyl-thioester intermediate) is an active-site residue. Residues His107 and Asp122 contribute to the active site.

This sequence belongs to the arylamine N-acetyltransferase family. Monomer and homodimer.

It is found in the cytoplasm. The enzyme catalyses an arylamine + acetyl-CoA = an N-acetylarylamine + CoA. It carries out the reaction an N-hydroxyarylamine + acetyl-CoA = an N-acetoxyarylamine + CoA. Inhibited by N-ethylmaleimide and iodoacetamide. Functionally, catalyzes both the acetyl-CoA-dependent N-acetylation of aromatic amines and the O-acetylation of N-hydroxyarylamines. In vitro, catalyzes the O-acetylation of N-hydroxy-Glu-P-1, and the N-acetylation of isoniazid and 2-aminofluorene. The sequence is that of Arylamine N-acetyltransferase / N-hydroxyarylamine O-acetyltransferase (nhoA) from Salmonella typhimurium (strain LT2 / SGSC1412 / ATCC 700720).